We begin with the raw amino-acid sequence, 143 residues long: UPF0292 protein Mbar_A0484 (143 aa).

The 82-residue stretch at G28–L109 folds into the Toprim domain. 3 residues coordinate Mg(2+): E34, D78, and D80.

Belongs to the UPF0292 family. Mg(2+) is required as a cofactor.

The sequence is that of UPF0292 protein Mbar_A0484 from Methanosarcina barkeri (strain Fusaro / DSM 804).